The primary structure comprises 559 residues: MGFSFSSNRFGYLTVTFLLVISCLLLGFFTNPVDSSALRPKSEHDCSALKHFHDYKSKCAYLKSIDPCASQGFFDYLSFLYCNFEGFPILGQFLLFLWLLLLFYLLGHTASEYFCSSLESLSKLLNLSPTVAGVTLLSLGNGAPDLFASLVSFMGESKGTYDVGLNTVVGGSGFVTCVVVGIISISLHKRRVRIERAAFIRDICFFCAAIGSLALILVYGKINFWGALGFCSLYAVYVAFVVLSWRFGGDQGAESDLESIHKRGSLSEPILQRDGLEEIEDGVVNGEHQIVDDDDDHQRYYYWKRLVIWAITLPLNLPRILTIPVVSEDKWSKPLAVASVTFAPVLLSFLWNWKRKPTSFEAGVVYLIGCLIGIALGFIAGATTKKLTPPKKWLLPWLAGGFVMSMTWSYISAQELVALLTSLGYIFGVSPSILGLTVLAWGNSIGDLITNLTMALHDGNEGAQVAVSGCYAGPIFNTLFALGISLVGCAWEAYPLSIVIKTDPRLLESLGFLVAGLVWSFLVLFSNRMRLGGVMGIGLLVIYLASLSLRIMQTVGDAH.

The next 13 membrane-spanning stretches (helical) occupy residues 10 to 30 (FGYL…GFFT), 86 to 106 (GFPI…FYLL), 131 to 151 (VAGV…ASLV), 167 to 187 (TVVG…SISL), 203 to 223 (ICFF…GKIN), 224 to 244 (FWGA…VVLS), 331 to 351 (WSKP…SFLW), 362 to 382 (AGVV…IAGA), 393 to 413 (WLLP…YISA), 416 to 436 (LVAL…ILGL), 480 to 500 (FALG…SIVI), 506 to 526 (LLES…VLFS), and 531 to 551 (LGGV…SLRI).

This sequence belongs to the Ca(2+):cation antiporter (CaCA) (TC 2.A.19) family. Cation/calcium exchanger (CCX) subfamily.

The protein resides in the membrane. In terms of biological role, membrane-localized H(+)-dependent K(+) and Na(+) transporter. In Arabidopsis thaliana (Mouse-ear cress), this protein is Cation/calcium exchanger 2 (CCX2).